We begin with the raw amino-acid sequence, 174 residues long: tRNA (cytidine(56)-2'-O)-methyltransferase (174 aa).

S-adenosyl-L-methionine is bound by residues Leu83, 108 to 112 (GAEKV), and 126 to 133 (VGNQPHSE).

It belongs to the aTrm56 family. As to quaternary structure, homodimer.

The protein resides in the cytoplasm. It carries out the reaction cytidine(56) in tRNA + S-adenosyl-L-methionine = 2'-O-methylcytidine(56) in tRNA + S-adenosyl-L-homocysteine + H(+). Functionally, specifically catalyzes the AdoMet-dependent 2'-O-ribose methylation of cytidine at position 56 in tRNAs. The polypeptide is tRNA (cytidine(56)-2'-O)-methyltransferase (Methanothrix thermoacetophila (strain DSM 6194 / JCM 14653 / NBRC 101360 / PT) (Methanosaeta thermophila)).